Consider the following 44-residue polypeptide: Conotoxin Rg11a (44 aa).

Disulfide bonds link C1–C15, C8–C22, C14–C30, and C21–C36.

As to expression, expressed by the venom duct.

It localises to the secreted. Functionally, neurotoxin. Elicits hypersensibility when injected intracranially in mice. May act via potassium channel currents. The sequence is that of Conotoxin Rg11a from Conus regius (Crown cone).